A 283-amino-acid polypeptide reads, in one-letter code: Homeobox protein six1a (283 aa).

Residues 124–183 (GEETSYCFKEKSRSVLREWYTHNPYPSPREKRELAEATGLTTTQVSNWFKNRRQRDRAAE) constitute a DNA-binding region (homeobox). The interval 168 to 264 (VSNWFKNRRQ…PLHGMQGHPH (97 aa)) is disordered. Residues 179-190 (DRAAEAKERENG) show a composition bias toward basic and acidic residues. Positions 237–248 (MNNPAAPAYPMP) are enriched in low complexity.

It belongs to the SIX/Sine oculis homeobox family.

Its subcellular location is the nucleus. It is found in the cytoplasm. Transcription factor that is involved in the regulation of cell proliferation, apoptosis and embryonic development. Depending on context, functions as a transcriptional repressor or activator. Plays an important role in the development of the inner ear, where it promotes hair cell proliferation and inhibits proliferation of neural progenitor cells. Required for normal myogenesis. Plays a role in the development of fast muscle fibers throughout the body, as well as the development of craniofacial muscles. The sequence is that of Homeobox protein six1a (six1a) from Danio rerio (Zebrafish).